The primary structure comprises 182 residues: ATP-dependent protease subunit HslV (182 aa).

The active site involves T6. Positions 164, 167, and 170 each coordinate Na(+).

This sequence belongs to the peptidase T1B family. HslV subfamily. As to quaternary structure, a double ring-shaped homohexamer of HslV is capped on each side by a ring-shaped HslU homohexamer. The assembly of the HslU/HslV complex is dependent on binding of ATP.

The protein localises to the cytoplasm. The enzyme catalyses ATP-dependent cleavage of peptide bonds with broad specificity.. Allosterically activated by HslU binding. In terms of biological role, protease subunit of a proteasome-like degradation complex believed to be a general protein degrading machinery. This is ATP-dependent protease subunit HslV from Borrelia garinii subsp. bavariensis (strain ATCC BAA-2496 / DSM 23469 / PBi) (Borreliella bavariensis).